A 246-amino-acid polypeptide reads, in one-letter code: MKRKQESKGAGEKRQGAGGRGQGEKKQGKQGRQGRQGRQGEKSPVPSPQSPIPNPQFTTPNPDEWLQIGKIVSAQGLSGEVRVYPDSDFPERFEVPGTRWLLRPGQTEPQPIELLHGRYLENKNLYVLQLAGVENRSQSEELRGCMLFVPASDRPELGEDEYHVVDLIGMEVFLQASGDLVGAVVDVIPAGNDLLEVSLHEPVTSDKKPKTVLIPFVKAIAPVVDLQTRRIEITPPPGLLELGSGV.

Residues 1-15 (MKRKQESKGAGEKRQ) are compositionally biased toward basic and acidic residues. Positions 1 to 63 (MKRKQESKGA…NPQFTTPNPD (63 aa)) are disordered. Pro residues predominate over residues 45–54 (VPSPQSPIPN). A PRC barrel domain is found at 158-239 (GEDEYHVVDL…RIEITPPPGL (82 aa)).

This sequence belongs to the RimM family. As to quaternary structure, binds ribosomal protein uS19.

It localises to the cytoplasm. In terms of biological role, an accessory protein needed during the final step in the assembly of 30S ribosomal subunit, possibly for assembly of the head region. Essential for efficient processing of 16S rRNA. May be needed both before and after RbfA during the maturation of 16S rRNA. It has affinity for free ribosomal 30S subunits but not for 70S ribosomes. This chain is Ribosome maturation factor RimM, found in Nostoc sp. (strain PCC 7120 / SAG 25.82 / UTEX 2576).